Consider the following 1524-residue polypeptide: DNA polymerase alpha catalytic subunit (1524 aa).

Disordered regions lie at residues 1-53 (MSGD…QKPI) and 68-139 (RRRE…KVNP). Residues 20 to 30 (SSRKDTLERLK) are compositionally biased toward basic and acidic residues. Acidic residues predominate over residues 79 to 96 (EDGEGGDLGYLDEGEEED). Residues Cys1333, Cys1336, Cys1375, Cys1378, Cys1414, Cys1419, Cys1440, and Cys1446 each contribute to the Zn(2+) site. Residues 1333 to 1378 (CPSCSTAFNCPSIISSVCASISKKPATPETEESDSTFWLKLHCPKC) form a CysA-type zinc finger. The CysB motif motif lies at 1414–1446 (CEDESCKHTTRSPNFRLLGERERGTVCPNYPNC).

The protein belongs to the DNA polymerase type-B family.

It localises to the nucleus. It carries out the reaction DNA(n) + a 2'-deoxyribonucleoside 5'-triphosphate = DNA(n+1) + diphosphate. Functionally, polymerase alpha in a complex with DNA primase is a replicative polymerase. The chain is DNA polymerase alpha catalytic subunit (POLA) from Arabidopsis thaliana (Mouse-ear cress).